The sequence spans 138 residues: Isochorismatase-like protein asqB (138 aa).

This sequence belongs to the isochorismatase family.

It carries out the reaction [(1'E)-5'-(3',3'-dimethyloxiran-2'-yl)-3'-hydroxy-3'-methylpent-1'-en-1'-yl]-quinolinone B = yaequinolone C. Its pathway is secondary metabolite biosynthesis. It functions in the pathway alkaloid biosynthesis. The protein operates within mycotoxin biosynthesis. Functionally, isochorismatase-like protein; part of the gene cluster that mediates the biosynthesis of the aspoquinolone mycotoxins. Within the pathway, asqB converts [(1'E)-5'-(3',3'-dimethyloxiran-2'-yl)-3'-hydroxy-3'-methylpent-1'-en-1'-yl]-quinolinone B into yaequinolone C. The first step of the pathway is catalyzed by the nonribosomal peptide synthetase asqK that condenses anthranilic acid and O-methyl-L-tyrosine to produce 4'-methoxycyclopeptin. 4'-methoxycyclopeptin is then converted to 4'-methoxydehydrocyclopeptin by the ketoglutarate-dependent dioxygenase asqJ. AsqJ also converts its first product 4'-methoxydehydrocyclopeptin to 4'-methoxycyclopenin. The following conversion of 4'-methoxycyclopenin into 4'-methoxyviridicatin is catalyzed by the cyclopenase asqI. 4'-methoxyviridicatin is the precursor of quinolone natural products, and is further converted to quinolinone B. The prenyltransferase asqH1 then catalyzes the canonical Friedel-Crafts alkylation of quinolinone B with dimethylallyl cation to yield dimethylallyl quinolone, which is subjected to FAD-dependent dehydrogenation by the FAD-linked oxidoreductase asqF to yield conjugated aryl diene. The delta(3') double bond then serves as the site of the second alkylation with DMAPP catalyzed by the prenyltransferase asqH2 to yield a carbenium ion intermediate, which can be attacked by H(2)O to yield a styrenyl quinolone containing a C3'-hydroxyprenyl chain. The FAD-dependent monooxygenase asqG performs epoxidation of the terminal C7'-C8' olefin. Finally, after dehydratation of the epoxide at C3 by asqC, the quinolone epoxide rearrangement protein asqO catalyzes an enzymatic 3-exo-tet cyclization to yield the cyclopropyl-THF ring system in aspoquinolone. The polypeptide is Isochorismatase-like protein asqB (Emericella nidulans (strain FGSC A4 / ATCC 38163 / CBS 112.46 / NRRL 194 / M139) (Aspergillus nidulans)).